A 65-amino-acid chain; its full sequence is Conotoxin Lp5.1 (65 aa).

Residues 1–22 form the signal peptide; sequence MRCVPVFIILLLLIPSAPSVDA. Residues 23 to 50 constitute a propeptide that is removed on maturation; it reads QRKTKDDVPLASFHDNAKRTLKRLWNKR.

This sequence belongs to the conotoxin T superfamily. Contains 2 disulfide bonds that can be either 'C1-C3, C2-C4' or 'C1-C4, C2-C3', since these disulfide connectivities have been observed for conotoxins with cysteine framework V (for examples, see AC P0DQQ7 and AC P81755). Expressed by the venom duct.

It localises to the secreted. The chain is Conotoxin Lp5.1 from Conus leopardus (Leopard cone).